The sequence spans 507 residues: Glycerol kinase (507 aa).

Threonine 14 provides a ligand contact to ADP. Residues threonine 14, threonine 15, and serine 16 each coordinate ATP. Threonine 14 is a sn-glycerol 3-phosphate binding site. ADP is bound at residue arginine 18. Residues arginine 84, glutamate 85, tyrosine 137, and aspartate 247 each contribute to the sn-glycerol 3-phosphate site. Positions 84, 85, 137, 247, and 248 each coordinate glycerol. 2 residues coordinate ADP: threonine 269 and glycine 312. Threonine 269, glycine 312, glutamine 316, and glycine 413 together coordinate ATP. Residues glycine 413 and asparagine 417 each contribute to the ADP site.

The protein belongs to the FGGY kinase family.

The catalysed reaction is glycerol + ATP = sn-glycerol 3-phosphate + ADP + H(+). It participates in polyol metabolism; glycerol degradation via glycerol kinase pathway; sn-glycerol 3-phosphate from glycerol: step 1/1. Inhibited by fructose 1,6-bisphosphate (FBP). Its function is as follows. Key enzyme in the regulation of glycerol uptake and metabolism. Catalyzes the phosphorylation of glycerol to yield sn-glycerol 3-phosphate. This chain is Glycerol kinase, found in Psychromonas ingrahamii (strain DSM 17664 / CCUG 51855 / 37).